We begin with the raw amino-acid sequence, 160 residues long: SsrA-binding protein (160 aa).

It belongs to the SmpB family.

It localises to the cytoplasm. Required for rescue of stalled ribosomes mediated by trans-translation. Binds to transfer-messenger RNA (tmRNA), required for stable association of tmRNA with ribosomes. tmRNA and SmpB together mimic tRNA shape, replacing the anticodon stem-loop with SmpB. tmRNA is encoded by the ssrA gene; the 2 termini fold to resemble tRNA(Ala) and it encodes a 'tag peptide', a short internal open reading frame. During trans-translation Ala-aminoacylated tmRNA acts like a tRNA, entering the A-site of stalled ribosomes, displacing the stalled mRNA. The ribosome then switches to translate the ORF on the tmRNA; the nascent peptide is terminated with the 'tag peptide' encoded by the tmRNA and targeted for degradation. The ribosome is freed to recommence translation, which seems to be the essential function of trans-translation. The polypeptide is SsrA-binding protein (Pectobacterium carotovorum subsp. carotovorum (strain PC1)).